Here is a 220-residue protein sequence, read N- to C-terminus: Putative glutathione S-transferase C1183.02 (220 aa).

In terms of domain architecture, GST N-terminal spans 2 to 81; sequence FLGTLYSFKT…YFYEKGKHND (80 aa). Residues 89-216 form the GST C-terminal domain; that stretch reads NEVEEAEMLK…FPLELPLTVT (128 aa).

Belongs to the GST superfamily.

It localises to the cytoplasm. It catalyses the reaction RX + glutathione = an S-substituted glutathione + a halide anion + H(+). Functionally, involved in the oxidative stress response and detoxification. The protein is Putative glutathione S-transferase C1183.02 of Schizosaccharomyces pombe (strain 972 / ATCC 24843) (Fission yeast).